Consider the following 860-residue polypeptide: DNA mismatch repair protein MutS (860 aa).

An ATP-binding site is contributed by 620-627; that stretch reads GPNMGGKS.

The protein belongs to the DNA mismatch repair MutS family.

In terms of biological role, this protein is involved in the repair of mismatches in DNA. It is possible that it carries out the mismatch recognition step. This protein has a weak ATPase activity. This chain is DNA mismatch repair protein MutS, found in Dechloromonas aromatica (strain RCB).